The chain runs to 201 residues: MSKVLVLKSSILATSSQSNQLADFFVEQWQAAHAGDQITVRDLAAQPIPVLDGELVGALRPSGTALTPRQQEALALSDELIAELQANDVIVIAAPMYNFNIPTQLKNYFDMIARAGVTFRYTEKGPEGLVTGKRAIILTSRGGIHKDTPTDLVVPYLRLFLGFIGITDVEFVFAEGIAYGPEVATKAQADAKTLLAQVVAA.

Residues Ser10, 16-18 (SQS), 96-99 (MYNF), and 140-143 (SRGG) contribute to the FMN site.

Belongs to the azoreductase type 1 family. As to quaternary structure, homodimer. FMN serves as cofactor.

It catalyses the reaction 2 a quinone + NADH + H(+) = 2 a 1,4-benzosemiquinone + NAD(+). The enzyme catalyses N,N-dimethyl-1,4-phenylenediamine + anthranilate + 2 NAD(+) = 2-(4-dimethylaminophenyl)diazenylbenzoate + 2 NADH + 2 H(+). In terms of biological role, quinone reductase that provides resistance to thiol-specific stress caused by electrophilic quinones. Its function is as follows. Also exhibits azoreductase activity. Catalyzes the reductive cleavage of the azo bond in aromatic azo compounds to the corresponding amines. The polypeptide is FMN-dependent NADH:quinone oxidoreductase (Yersinia pseudotuberculosis serotype O:1b (strain IP 31758)).